A 486-amino-acid polypeptide reads, in one-letter code: Glutamyl-tRNA(Gln) amidotransferase subunit A (486 aa).

Catalysis depends on charge relay system residues lysine 76 and serine 151. Residue serine 175 is the Acyl-ester intermediate of the active site.

This sequence belongs to the amidase family. GatA subfamily. Heterotrimer of A, B and C subunits.

It catalyses the reaction L-glutamyl-tRNA(Gln) + L-glutamine + ATP + H2O = L-glutaminyl-tRNA(Gln) + L-glutamate + ADP + phosphate + H(+). Its function is as follows. Allows the formation of correctly charged Gln-tRNA(Gln) through the transamidation of misacylated Glu-tRNA(Gln) in organisms which lack glutaminyl-tRNA synthetase. The reaction takes place in the presence of glutamine and ATP through an activated gamma-phospho-Glu-tRNA(Gln). The chain is Glutamyl-tRNA(Gln) amidotransferase subunit A from Nitrosomonas eutropha (strain DSM 101675 / C91 / Nm57).